The chain runs to 366 residues: Variable large protein 10 (366 aa).

A signal peptide spans 1 to 18 (MRKRISAIIMTLFMVLAS). A lipid anchor (N-palmitoyl cysteine) is attached at Cys-19. Residue Cys-19 is the site of S-diacylglycerol cysteine attachment.

The protein belongs to the variable large protein (Vlp) family. Beta subfamily.

The protein localises to the cell outer membrane. The Vlp and Vsp proteins are antigenically distinct proteins, only one vlp or vsp gene is transcriptionally active at any one time. Switching between these genes is a mechanism of host immune response evasion. The sequence is that of Variable large protein 10 from Borrelia hermsii.